A 168-amino-acid chain; its full sequence is Probable chemoreceptor glutamine deamidase CheD (168 aa).

The protein belongs to the CheD family.

The catalysed reaction is L-glutaminyl-[protein] + H2O = L-glutamyl-[protein] + NH4(+). Its function is as follows. Probably deamidates glutamine residues to glutamate on methyl-accepting chemotaxis receptors (MCPs), playing an important role in chemotaxis. The polypeptide is Probable chemoreceptor glutamine deamidase CheD (Pseudomonas syringae pv. tomato (strain ATCC BAA-871 / DC3000)).